Here is an 834-residue protein sequence, read N- to C-terminus: Periplasmic nitrate reductase (834 aa).

A signal peptide (tat-type signal) is located at residues 1–29 (MNLTRREFAKANAAAIAAAAAGLPILVRA). Positions 41–97 (LVWNKAPCRFCGTGCSVMVATRDGQVVATHGDIKAEVNRGINCVKGYFLSKIMYGSD) constitute a 4Fe-4S Mo/W bis-MGD-type domain. Residues Cys48, Cys51, Cys55, and Cys83 each contribute to the [4Fe-4S] cluster site. Mo-bis(molybdopterin guanine dinucleotide)-binding positions include Lys85, Gln152, Asn177, Cys181, 214-221 (WGSNMAEM), 245-249 (STFEH), 264-266 (QTD), Met375, Gln379, Asn485, 511-512 (SD), Lys534, Asp561, and 721-730 (TGRVLEHWHT). Substrate is bound at residue Phe797. Residues Asn805 and Lys822 each contribute to the Mo-bis(molybdopterin guanine dinucleotide) site.

It belongs to the prokaryotic molybdopterin-containing oxidoreductase family. NasA/NapA/NarB subfamily. In terms of assembly, component of the periplasmic nitrate reductase NapAB complex composed of NapA and NapB. The cofactor is [4Fe-4S] cluster. Requires Mo-bis(molybdopterin guanine dinucleotide) as cofactor. Post-translationally, predicted to be exported by the Tat system. The position of the signal peptide cleavage has not been experimentally proven.

The protein localises to the periplasm. It carries out the reaction 2 Fe(II)-[cytochrome] + nitrate + 2 H(+) = 2 Fe(III)-[cytochrome] + nitrite + H2O. Its function is as follows. Catalytic subunit of the periplasmic nitrate reductase complex NapAB. Receives electrons from NapB and catalyzes the reduction of nitrate to nitrite. The sequence is that of Periplasmic nitrate reductase from Pseudomonas aeruginosa (strain UCBPP-PA14).